A 347-amino-acid chain; its full sequence is Inosamine-phosphate amidinotransferase 1 (347 aa).

Residues Asp179 and His227 contribute to the active site. Cys332 acts as the Amidino-cysteine intermediate in catalysis.

This sequence belongs to the amidinotransferase family. As to quaternary structure, homodimer.

It catalyses the reaction 1-amino-1-deoxy-scyllo-inositol 4-phosphate + L-arginine = 1-guanidino-1-deoxy-scyllo-inositol 4-phosphate + L-ornithine. It participates in antibiotic biosynthesis; streptomycin biosynthesis. Catalyzes two non-consecutive transamidination reactions. It converts scyllo-inosamine 4-phosphate into N-amidino-scyllo-inosamine 4-phosphate and N1-amidinostreptamine 6-phosphate into streptidine 6-phosphate. The chain is Inosamine-phosphate amidinotransferase 1 (strB1) from Streptomyces griseus.